The chain runs to 288 residues: Small ribosomal subunit protein uS15m (288 aa).

Residues 1–50 (MRLFEGAFQPWKLASTNLMQQCLLLNKKSQFHTTCILQGLKKQKANQRRK) constitute a mitochondrion transit peptide.

Belongs to the universal ribosomal protein uS15 family. Component of the mitochondrial small ribosomal subunit (mt-SSU). Mature yeast 74S mitochondrial ribosomes consist of a small (37S) and a large (54S) subunit. The 37S small subunit contains a 15S ribosomal RNA (15S mt-rRNA) and at least 32 different proteins. The 54S large subunit contains a 21S rRNA (21S mt-rRNA) and at least 45 different proteins.

It localises to the mitochondrion. In terms of biological role, component of the mitochondrial ribosome (mitoribosome), a dedicated translation machinery responsible for the synthesis of mitochondrial genome-encoded proteins, including at least some of the essential transmembrane subunits of the mitochondrial respiratory chain. The mitoribosomes are attached to the mitochondrial inner membrane and translation products are cotranslationally integrated into the membrane. This Schizosaccharomyces pombe (strain 972 / ATCC 24843) (Fission yeast) protein is Small ribosomal subunit protein uS15m (mrps28).